A 353-amino-acid polypeptide reads, in one-letter code: UPF0283 membrane protein YcjF (353 aa).

Helical transmembrane passes span M70–T90, V100–V120, and E213–W233.

It belongs to the UPF0283 family.

Its subcellular location is the cell inner membrane. This is UPF0283 membrane protein YcjF from Escherichia coli O7:K1 (strain IAI39 / ExPEC).